The sequence spans 433 residues: CinA-like protein (433 aa).

The protein belongs to the CinA family.

The sequence is that of CinA-like protein from Frankia casuarinae (strain DSM 45818 / CECT 9043 / HFP020203 / CcI3).